We begin with the raw amino-acid sequence, 476 residues long: Cobyric acid synthase (476 aa).

Residues 242–428 (AFRVVVPVPP…LHGLFDTPDA (187 aa)) enclose the GATase cobBQ-type domain. The Nucleophile role is filled by cysteine 323. Histidine 420 is a catalytic residue.

This sequence belongs to the CobB/CobQ family. CobQ subfamily.

The protein operates within cofactor biosynthesis; adenosylcobalamin biosynthesis. In terms of biological role, catalyzes amidations at positions B, D, E, and G on adenosylcobyrinic A,C-diamide. NH(2) groups are provided by glutamine, and one molecule of ATP is hydrogenolyzed for each amidation. The sequence is that of Cobyric acid synthase from Janthinobacterium sp. (strain Marseille) (Minibacterium massiliensis).